We begin with the raw amino-acid sequence, 149 residues long: Large ribosomal subunit protein uL15 (149 aa).

The segment at 1–61 (MELNSLRPAL…GGQMPLQRRL (61 aa)) is disordered. Residues 30 to 39 (TATKGHKGQK) are compositionally biased toward basic residues.

It belongs to the universal ribosomal protein uL15 family. In terms of assembly, part of the 50S ribosomal subunit.

In terms of biological role, binds to the 23S rRNA. The protein is Large ribosomal subunit protein uL15 of Trichlorobacter lovleyi (strain ATCC BAA-1151 / DSM 17278 / SZ) (Geobacter lovleyi).